Reading from the N-terminus, the 546-residue chain is uncharacterized protein (546 aa).

5 helical membrane passes run 4–23 (ILLE…GYPL), 30–47 (GSSL…AMGS), 57–79 (IVYV…PAFV), 91–113 (ALII…LLGF), and 155–177 (PVVG…ISLV). RCK C-terminal domains follow at residues 189 to 274 (GKRL…FLGE) and 275 to 359 (VSEE…FFGD). 6 consecutive transmembrane segments (helical) span residues 372-394 (FSLG…GGIT), 399-421 (FAGG…SMVW), 434-456 (IGLV…TTLA), 460-482 (GLAI…LWIG), 489-511 (PMSI…GYAL), and 521-543 (IGYA…ILLT).

This sequence belongs to the AAE transporter (TC 2.A.81) family.

The protein localises to the cell membrane. This is an uncharacterized protein from Geobacter sulfurreducens (strain ATCC 51573 / DSM 12127 / PCA).